The sequence spans 317 residues: Melanocyte-stimulating hormone receptor (317 aa).

The Extracellular segment spans residues 1 to 37; sequence MPVQGSQRRLLGSLNSTPTAPPHLGLAANQTGARCLE. Asparagine 29 carries N-linked (GlcNAc...) asparagine glycosylation. A helical transmembrane segment spans residues 38–63; the sequence is VSIPDGLFLSLGLVSLVENVLVVTAI. Topologically, residues 64-72 are cytoplasmic; sequence AKNRNLHSP. The chain crosses the membrane as a helical span at residues 73 to 93; the sequence is MYCFICCLALSDLLVSGSNML. The Extracellular portion of the chain corresponds to 94–118; the sequence is ETAVILLLEAGALAARAAVVQQLDN. A helical membrane pass occupies residues 119–140; sequence VIDVITCSSMLSSLCFLGAIAV. At 141 to 163 the chain is on the cytoplasmic side; sequence DRYISIFYALRYHSIVTLPRARR. The helical transmembrane segment at 164–183 threads the bilayer; sequence AVAAIWVASVLFSMLFIAYY. Over 184–191 the chain is Extracellular; it reads DHAAVLLC. The chain crosses the membrane as a helical span at residues 192–211; the sequence is LVVFFLAMLVLMAVLYIHML. Residues 212 to 240 are Cytoplasmic-facing; that stretch reads VRACQHAQGIARLHKRQRPAHQGFGLKGA. Residues 241–266 traverse the membrane as a helical segment; sequence ATLTILLGIFFLCWGPFFLHLTLIVL. The Extracellular portion of the chain corresponds to 267-279; sequence CPQHPTCSCIFKN. A helical membrane pass occupies residues 280–300; sequence FNLFLALIICNAIIDPLIYAF. Residues 301–317 lie on the Cytoplasmic side of the membrane; the sequence is RSQELRRTLKEVLLCSW. A lipid anchor (S-palmitoyl cysteine) is attached at cysteine 315.

This sequence belongs to the G-protein coupled receptor 1 family. In terms of assembly, interacts with MGRN1, but does not undergo MGRN1-mediated ubiquitination; this interaction competes with GNAS-binding and thus inhibits agonist-induced cAMP production. Interacts with OPN3; the interaction results in a decrease in MC1R-mediated cAMP signaling and ultimately a decrease in melanin production in melanocytes.

It localises to the cell membrane. In terms of biological role, receptor for MSH (alpha, beta and gamma) and ACTH. The activity of this receptor is mediated by G proteins which activate adenylate cyclase. Mediates melanogenesis, the production of eumelanin (black/brown) and phaeomelanin (red/yellow), via regulation of cAMP signaling in melanocytes. This is Melanocyte-stimulating hormone receptor (MC1R) from Cercopithecus diana (Diana monkey).